Here is a 198-residue protein sequence, read N- to C-terminus: Imidazoleglycerol-phosphate dehydratase (198 aa).

It belongs to the imidazoleglycerol-phosphate dehydratase family.

It localises to the cytoplasm. The enzyme catalyses D-erythro-1-(imidazol-4-yl)glycerol 3-phosphate = 3-(imidazol-4-yl)-2-oxopropyl phosphate + H2O. Its pathway is amino-acid biosynthesis; L-histidine biosynthesis; L-histidine from 5-phospho-alpha-D-ribose 1-diphosphate: step 6/9. In Agrobacterium fabrum (strain C58 / ATCC 33970) (Agrobacterium tumefaciens (strain C58)), this protein is Imidazoleglycerol-phosphate dehydratase.